The chain runs to 118 residues: Large ribosomal subunit protein bL20 (118 aa).

It belongs to the bacterial ribosomal protein bL20 family.

Functionally, binds directly to 23S ribosomal RNA and is necessary for the in vitro assembly process of the 50S ribosomal subunit. It is not involved in the protein synthesizing functions of that subunit. This is Large ribosomal subunit protein bL20 from Shigella flexneri serotype 5b (strain 8401).